Reading from the N-terminus, the 772-residue chain is Polyribonucleotide nucleotidyltransferase (772 aa).

Mg(2+) is bound by residues aspartate 486 and aspartate 492. Residues 553–612 (PRIETLQIDKSKIRDVIGTGGKVIREIVATTGAKVDIDDEGLIKISSSDLTQIEAAKNWI) enclose the KH domain. The region spanning 622-690 (GKIYKGKVVN…QRGKVRLSMR (69 aa)) is the S1 motif domain. Residues 695-772 (ETGAELEDTR…HMPAFLKSDD (78 aa)) form a disordered region. Residues 701 to 760 (EDTRPPREPREPRGDRGDRGDRGDRRGPRGDRGPRREGGDRGPRREGGDRPRRDRDDGPA) show a composition bias toward basic and acidic residues.

The protein belongs to the polyribonucleotide nucleotidyltransferase family. It depends on Mg(2+) as a cofactor.

It localises to the cytoplasm. It carries out the reaction RNA(n+1) + phosphate = RNA(n) + a ribonucleoside 5'-diphosphate. Its function is as follows. Involved in mRNA degradation. Catalyzes the phosphorolysis of single-stranded polyribonucleotides processively in the 3'- to 5'-direction. The chain is Polyribonucleotide nucleotidyltransferase from Novosphingobium aromaticivorans (strain ATCC 700278 / DSM 12444 / CCUG 56034 / CIP 105152 / NBRC 16084 / F199).